Reading from the N-terminus, the 86-residue chain is Large ribosomal subunit protein bL31B (86 aa).

Belongs to the bacterial ribosomal protein bL31 family. Type B subfamily. As to quaternary structure, part of the 50S ribosomal subunit.

The protein is Large ribosomal subunit protein bL31B of Yersinia enterocolitica serotype O:8 / biotype 1B (strain NCTC 13174 / 8081).